The chain runs to 555 residues: Coiled-coil domain-containing protein 102A (555 aa).

Disordered stretches follow at residues 1–68 (MSHG…ADGD), 136–202 (LAGA…GSQE), and 214–254 (PEEP…EEDA). Ser12, Ser26, and Ser28 each carry phosphoserine. Over residues 37–61 (SLPPTPPSGTPSPGPPPALPLPPTP) the composition is skewed to pro residues. Positions 72-161 (REELRLRELE…ARGRELARLR (90 aa)) form a coiled coil. Composition is skewed to basic and acidic residues over residues 136–159 (LAGARRERQEAQGESEARGRELAR) and 166–183 (GVDRTPDGPETEPEREQE). Over residues 224–236 (RSAGAGAPRGSSG) the composition is skewed to low complexity. Coiled coils occupy residues 268–401 (QKVL…RRQT) and 432–522 (KLKK…QNAP). Residues 478 to 555 (ELDEAHNQAR…EDEDLQIQVA (78 aa)) form a disordered region. Acidic residues predominate over residues 536–555 (EAGDGASDLDEDEDLQIQVA). Residue Ser542 is modified to Phosphoserine.

This chain is Coiled-coil domain-containing protein 102A (CCDC102A), found in Bos taurus (Bovine).